We begin with the raw amino-acid sequence, 505 residues long: GDP-Man:Man(3)GlcNAc(2)-PP-Dol alpha-1,2-mannosyltransferase (505 aa).

Residues 1–4 (MSTM) lie on the Lumenal side of the membrane. A helical membrane pass occupies residues 5–25 (LWVVVAAVLLFVLPVVRVPML). Residues 26 to 130 (DLTRRNIIRW…KWVDGSTWKH (105 aa)) are Cytoplasmic-facing. An intramembrane region (helical) is located at residues 131–151 (LTLVGQAMGSMLLTIEALLRF). Topologically, residues 152–374 (VPDIWLDTMG…FGINAMWNEH (223 aa)) are cytoplasmic. The helical intramembrane region spans 375-395 (FGIAVVEYAAAGLISLVHASA). Residues 396–505 (GPLLDIIVPW…EHKTSRLGSN (110 aa)) lie on the Cytoplasmic side of the membrane.

This sequence belongs to the glycosyltransferase group 1 family.

It localises to the endoplasmic reticulum membrane. The enzyme catalyses an alpha-D-Man-(1-&gt;3)-[alpha-D-Man-(1-&gt;6)]-beta-D-Man-(1-&gt;4)-beta-D-GlcNAc-(1-&gt;4)-alpha-D-GlcNAc-diphospho-di-trans,poly-cis-dolichol + 2 GDP-alpha-D-mannose = an alpha-D-Man-(1-&gt;2)-alpha-D-Man-(1-&gt;2)-alpha-D-Man-(1-&gt;3)-[alpha-D-Man-(1-&gt;6)]-beta-D-Man-(1-&gt;4)-beta-D-GlcNAc-(1-&gt;4)-alpha-D-GlcNAc-diphospho-di-trans,poly-cis-dolichol + 2 GDP + 2 H(+). It participates in protein modification; protein glycosylation. In terms of biological role, GDP-Man:Man(3)GlcNAc(2)-PP-Dol alpha-1,2-mannosyltransferase that operates in the biosynthetic pathway of dolichol-linked oligosaccharides, the glycan precursors employed in protein asparagine (N)-glycosylation. The assembly of dolichol-linked oligosaccharides begins on the cytosolic side of the endoplasmic reticulum membrane and finishes in its lumen. The sequential addition of sugars to dolichol pyrophosphate produces dolichol-linked oligosaccharides containing fourteen sugars, including two GlcNAcs, nine mannoses and three glucoses. Once assembled, the oligosaccharide is transferred from the lipid to nascent proteins by oligosaccharyltransferases. Catalyzes, on the cytoplasmic face of the endoplasmic reticulum, the addition of the fourth and fifth mannose residues to the dolichol-linked oligosaccharide chain, to produce Man(5)GlcNAc(2)-PP-dolichol core oligosaccharide. In Candida glabrata (strain ATCC 2001 / BCRC 20586 / JCM 3761 / NBRC 0622 / NRRL Y-65 / CBS 138) (Yeast), this protein is GDP-Man:Man(3)GlcNAc(2)-PP-Dol alpha-1,2-mannosyltransferase (ALG11).